Reading from the N-terminus, the 267-residue chain is Translation initiation factor 2 subunit alpha (267 aa).

One can recognise an S1 motif domain in the interval 17 to 88 (GEIVIGTVKR…KRGHIDLSIK (72 aa)).

It belongs to the eIF-2-alpha family. As to quaternary structure, heterotrimer composed of an alpha, a beta and a gamma chain.

Its function is as follows. eIF-2 functions in the early steps of protein synthesis by forming a ternary complex with GTP and initiator tRNA. This Archaeoglobus fulgidus (strain ATCC 49558 / DSM 4304 / JCM 9628 / NBRC 100126 / VC-16) protein is Translation initiation factor 2 subunit alpha (eif2a).